The sequence spans 218 residues: UPF0502 protein Shewana3_1622 (218 aa).

The protein belongs to the UPF0502 family.

The sequence is that of UPF0502 protein Shewana3_1622 from Shewanella sp. (strain ANA-3).